The chain runs to 333 residues: Phosphate acyltransferase (333 aa).

The protein belongs to the PlsX family. As to quaternary structure, homodimer. Probably interacts with PlsY.

Its subcellular location is the cytoplasm. It carries out the reaction a fatty acyl-[ACP] + phosphate = an acyl phosphate + holo-[ACP]. It participates in lipid metabolism; phospholipid metabolism. Its function is as follows. Catalyzes the reversible formation of acyl-phosphate (acyl-PO(4)) from acyl-[acyl-carrier-protein] (acyl-ACP). This enzyme utilizes acyl-ACP as fatty acyl donor, but not acyl-CoA. The polypeptide is Phosphate acyltransferase (Clostridium beijerinckii (strain ATCC 51743 / NCIMB 8052) (Clostridium acetobutylicum)).